We begin with the raw amino-acid sequence, 577 residues long: Adenine deaminase (577 aa).

Belongs to the metallo-dependent hydrolases superfamily. Adenine deaminase family. Mn(2+) is required as a cofactor.

It carries out the reaction adenine + H2O + H(+) = hypoxanthine + NH4(+). The protein is Adenine deaminase (adeC) of Bacillus subtilis (strain 168).